Here is a 453-residue protein sequence, read N- to C-terminus: Bifunctional protein GlmU (453 aa).

Residues 1–226 are pyrophosphorylase; the sequence is MKFSTVILAA…SIEVEGVNDR (226 aa). UDP-N-acetyl-alpha-D-glucosamine is bound by residues 8–11, lysine 22, glutamine 73, 78–79, 100–102, glycine 137, glutamate 151, asparagine 166, and asparagine 224; these read LAAG, GT, and YGD. Position 102 (aspartate 102) interacts with Mg(2+). Residue asparagine 224 coordinates Mg(2+). The interval 227–247 is linker; sequence IQLARLERAFQARQAKKLLEQ. The N-acetyltransferase stretch occupies residues 248–453; that stretch reads GVMLRDPARF…AGWQRPAKKK (206 aa). Residues arginine 330 and lysine 348 each coordinate UDP-N-acetyl-alpha-D-glucosamine. The active-site Proton acceptor is the histidine 360. The UDP-N-acetyl-alpha-D-glucosamine site is built by tyrosine 363 and asparagine 374. Residues alanine 377, 383–384, serine 402, alanine 420, and arginine 437 each bind acetyl-CoA; that span reads NY.

It in the N-terminal section; belongs to the N-acetylglucosamine-1-phosphate uridyltransferase family. The protein in the C-terminal section; belongs to the transferase hexapeptide repeat family. As to quaternary structure, homotrimer. Requires Mg(2+) as cofactor.

The protein resides in the cytoplasm. It carries out the reaction alpha-D-glucosamine 1-phosphate + acetyl-CoA = N-acetyl-alpha-D-glucosamine 1-phosphate + CoA + H(+). It catalyses the reaction N-acetyl-alpha-D-glucosamine 1-phosphate + UTP + H(+) = UDP-N-acetyl-alpha-D-glucosamine + diphosphate. The protein operates within nucleotide-sugar biosynthesis; UDP-N-acetyl-alpha-D-glucosamine biosynthesis; N-acetyl-alpha-D-glucosamine 1-phosphate from alpha-D-glucosamine 6-phosphate (route II): step 2/2. It functions in the pathway nucleotide-sugar biosynthesis; UDP-N-acetyl-alpha-D-glucosamine biosynthesis; UDP-N-acetyl-alpha-D-glucosamine from N-acetyl-alpha-D-glucosamine 1-phosphate: step 1/1. It participates in bacterial outer membrane biogenesis; LPS lipid A biosynthesis. In terms of biological role, catalyzes the last two sequential reactions in the de novo biosynthetic pathway for UDP-N-acetylglucosamine (UDP-GlcNAc). The C-terminal domain catalyzes the transfer of acetyl group from acetyl coenzyme A to glucosamine-1-phosphate (GlcN-1-P) to produce N-acetylglucosamine-1-phosphate (GlcNAc-1-P), which is converted into UDP-GlcNAc by the transfer of uridine 5-monophosphate (from uridine 5-triphosphate), a reaction catalyzed by the N-terminal domain. The polypeptide is Bifunctional protein GlmU (Vibrio cholerae serotype O1 (strain M66-2)).